Consider the following 712-residue polypeptide: Matrix metalloproteinase-9 (712 aa).

The signal sequence occupies residues 1–19; sequence MSPLQPLVLALLVLACCSA. Positions 20 to 106 are cleaved as a propeptide — activation peptide; the sequence is VPRRRQPTVV…PRCGVPDVGR (87 aa). Asn38 carries an N-linked (GlcNAc...) asparagine glycan. The short motif at 97–104 is the Cysteine switch element; the sequence is PRCGVPDV. Cys99 serves as a coordination point for Zn(2+). N-linked (GlcNAc...) asparagine glycosylation is found at Asn120 and Asn127. Asp131 and Asp165 together coordinate Ca(2+). Positions 175 and 177 each coordinate Zn(2+). Ca(2+)-binding residues include Asp182, Gly183, Asn185, and Leu187. His190 is a Zn(2+) binding site. Ca(2+) is bound by residues Gly197, Gln199, and Asp201. His203 contributes to the Zn(2+) binding site. Ca(2+)-binding residues include Asp205, Asp206, and Glu208. Fibronectin type-II domains follow at residues 225–273, 283–331, and 342–390; these read AKGA…FCPS, ADGK…FCPT, and AAGE…FCPD. 6 disulfides stabilise this stretch: Cys230–Cys256, Cys244–Cys271, Cys288–Cys314, Cys302–Cys329, Cys347–Cys373, and Cys361–Cys388. A Zn(2+)-binding site is contributed by His401. Glu402 is a catalytic residue. Zn(2+) is bound by residues His405 and His411. The interval 440 to 519 is disordered; sequence QHLYGPRPEP…PTESPDPAED (80 aa). The span at 455-465 shows a compositional bias: low complexity; the sequence is TTTTTTTTEPQ. The segment covering 491 to 504 has biased composition (pro residues); that stretch reads TGPPAAGPTGPPTA. Residues 505 to 514 are compositionally biased toward low complexity; that stretch reads GPSAAPTESP. Cys521 and Cys709 form a disulfide bridge. Hemopexin repeat units follow at residues 523 to 568, 569 to 613, 615 to 662, and 663 to 709; these read VDIF…WPAL, PRKL…GLGP, VAQV…FPGV, and PIST…LLKC.

The protein belongs to the peptidase M10A family. Exists as monomer or homodimer; disulfide-linked. Also exists as heterodimer with LCN2. Macrophages and transformed cell lines produce only the monomeric form. Interacts with ECM1. Zn(2+) is required as a cofactor. The cofactor is Ca(2+). N- and O-glycosylated.

The protein localises to the secreted. It is found in the extracellular space. Its subcellular location is the extracellular matrix. The catalysed reaction is Cleavage of gelatin types I and V and collagen types IV and V.. Functionally, matrix metalloproteinase that plays an essential role in local proteolysis of the extracellular matrix and in leukocyte migration. Could play a role in bone osteoclastic resorption. Cleaves KiSS1 at a Gly-|-Leu bond. Cleaves NINJ1 to generate the Secreted ninjurin-1 form. Cleaves type IV and type V collagen into large C-terminal three quarter fragments and shorter N-terminal one quarter fragments. Degrades fibronectin but not laminin or Pz-peptide. The chain is Matrix metalloproteinase-9 from Bos taurus (Bovine).